Consider the following 107-residue polypeptide: Vasopressin-neurophysin 2 (107 aa).

The cysteines at positions 1 and 6 are disulfide-linked. Glycine 9 carries the glycine amide modification. 7 disulfide bridges follow: cysteine 22-cysteine 66, cysteine 25-cysteine 39, cysteine 33-cysteine 56, cysteine 40-cysteine 46, cysteine 73-cysteine 85, cysteine 79-cysteine 97, and cysteine 86-cysteine 91.

It belongs to the vasopressin/oxytocin family. As to quaternary structure, interacts with vasopressin receptors V1bR/AVPR1B (Ki=85 pM), V1aR/AVPR1A (Ki=0.6 nM) and V2R/AVPR2 (Ki=4.9 nM). Interacts with oxytocin receptor (OXTR) (Ki=110 nM).

The protein resides in the secreted. Neurophysin 2 specifically binds vasopressin. Its function is as follows. Vasopressin has a direct antidiuretic action on the kidney, it also causes vasoconstriction of the peripheral vessels. Acts by binding to vasopressin receptors (V1bR/AVPR1B, V1aR/AVPR1A, and V2R/AVPR2). This Balaenoptera physalus (Fin whale) protein is Vasopressin-neurophysin 2 (AVP).